The primary structure comprises 376 residues: Beta-centractin (376 aa).

An N-acetylmethionine modification is found at M1. Position 4 is a 3'-nitrotyrosine (Y4).

It belongs to the actin family. ARP1 subfamily.

The protein resides in the cytoplasm. It is found in the cytoskeleton. Its subcellular location is the microtubule organizing center. It localises to the centrosome. In terms of biological role, component of a multi-subunit complex involved in microtubule based vesicle motility. It is associated with the centrosome. The polypeptide is Beta-centractin (ACTR1B) (Bos taurus (Bovine)).